Consider the following 548-residue polypeptide: Solute carrier family 22 member 7 (548 aa).

Residues 21–41 (VALLALPRVLLPLHFLLPIFL) form a helical membrane-spanning segment. N-linked (GlcNAc...) asparagine glycosylation occurs at asparagine 91. The next 11 helical transmembrane spans lie at 146-166 (AAST…GYLS), 180-200 (VSTL…MFAI), 204-224 (LTGS…LEWL), 234-254 (VLSS…GYLI), 259-279 (WLLL…WWVP), 346-366 (ISLC…GLSL), 376-397 (YQTQ…YLSV), 404-423 (LTQA…RLLV), 432-452 (TVLA…AYLF), 466-486 (MGLT…AALL), and 493-513 (LPKL…LLLP). Phenylalanine 441 serves as the catalytic Important for glutamate counteranion efflux. The segment at 522–548 (ETIQDVERKSAPTSLQEEEMPMKQVQN) is disordered.

Belongs to the major facilitator (TC 2.A.1) superfamily. Organic cation transporter (TC 2.A.1.19) family. In terms of tissue distribution, mainly expressed in liver and kidney. In kidney, expressed in proximal tubular cells. Also expressed in pancreas, small intestine, spinal cord, lung, brain and heart. Expressed in fetal liver.

It localises to the basolateral cell membrane. It is found in the apical cell membrane. The protein resides in the cell membrane. The protein localises to the cytoplasm. Its subcellular location is the cytosol. It catalyses the reaction orotate(out) + L-glutamate(in) = orotate(in) + L-glutamate(out). The enzyme catalyses 3',5'-cyclic GMP(in) = 3',5'-cyclic GMP(out). The catalysed reaction is GMP(in) = GMP(out). It carries out the reaction 2'-deoxyguanosine(in) = 2'-deoxyguanosine(out). It catalyses the reaction GDP(in) = GDP(out). The enzyme catalyses guanosine(in) = guanosine(out). The catalysed reaction is GTP(in) = GTP(out). It carries out the reaction 3',5'-cyclic AMP(in) = 3',5'-cyclic AMP(out). It catalyses the reaction creatinine(in) = creatinine(out). The enzyme catalyses prostaglandin E2(out) = prostaglandin E2(in). The catalysed reaction is 2-oxoglutarate(in) = 2-oxoglutarate(out). It carries out the reaction glutarate(in) = glutarate(out). It catalyses the reaction urate(out) = urate(in). The enzyme catalyses estrone 3-sulfate(out) = estrone 3-sulfate(in). The catalysed reaction is prostaglandin F2alpha(out) = prostaglandin F2alpha(in). In terms of biological role, functions as a Na(+)-independent bidirectional multispecific transporter. Contributes to the renal and hepatic elimination of endogenous organic compounds from the systemic circulation into the urine and bile, respectively. Capable of transporting a wide range of purine and pyrimidine nucleobases, nucleosides and nucleotides, with cGMP, 2'deoxyguanosine and GMP being the preferred substrates. Functions as a pH- and chloride-independent cGMP bidirectional facilitative transporter that can regulate both intracellular and extracellular levels of cGMP and may be involved in cGMP signaling pathways. Mediates orotate/glutamate bidirectional exchange and most likely display a physiological role in hepatic release of glutamate into the blood. Involved in renal secretion and possible reabsorption of creatinine. Able to uptake prostaglandin E2 (PGE2) and may contribute to PGE2 renal excretion. Also transports alpha-ketoglutarate and urate. Apart from the orotate/glutamate exchange, the counterions for the uptake of other SLC22A7/OAT2 substrates remain to be identified. Functionally, non functional transporter. Involved in the uptake of prostaglandin F2-alpha (PGF2-alpha). The polypeptide is Solute carrier family 22 member 7 (Homo sapiens (Human)).